The sequence spans 160 residues: Transcription elongation factor GreA (160 aa).

The stretch at 10–37 (TLDGKAKLENELQELKTVKRKEVVERIK) forms a coiled coil.

Belongs to the GreA/GreB family.

Its function is as follows. Necessary for efficient RNA polymerase transcription elongation past template-encoded arresting sites. The arresting sites in DNA have the property of trapping a certain fraction of elongating RNA polymerases that pass through, resulting in locked ternary complexes. Cleavage of the nascent transcript by cleavage factors such as GreA or GreB allows the resumption of elongation from the new 3'terminus. GreA releases sequences of 2 to 3 nucleotides. The protein is Transcription elongation factor GreA of Listeria innocua serovar 6a (strain ATCC BAA-680 / CLIP 11262).